Reading from the N-terminus, the 346-residue chain is Enkurin domain-containing protein 1 (346 aa).

Residues 1–35 (MCEGPSRISGPIPPDPTLCPDNYRRPTSAQGRLEG) are disordered. A Phosphoserine modification is found at Ser-91. The required for binding to microtubules stretch occupies residues 91 to 171 (SLKRKDPKDH…AHFLRAHSRC (81 aa)). Residues 114 to 125 (RFREQERSREQG) show a composition bias toward basic and acidic residues. 3 disordered regions span residues 114–137 (RFRE…WRSP), 167–197 (AHSR…EPGL), and 260–280 (AEAR…TRMP). Position 136 is a phosphoserine (Ser-136). A compositionally biased stretch (pro residues) spans 174-190 (GLPPPHVSSPQPTPPGP). Residues 251 to 343 (ERRDLWRREA…IFSRPKVFVK (93 aa)) enclose the Enkurin domain.

Interacts with alpha-tubulin. Interacts (via central region) with CCP110 (via N-terminal region); competes with CEP97 for binding to CCP110.

It localises to the cytoplasm. The protein localises to the cytoskeleton. Its subcellular location is the microtubule organizing center. The protein resides in the centrosome. It is found in the centriole. It localises to the cilium basal body. The protein localises to the cell projection. Its subcellular location is the cilium. The protein resides in the spindle. It is found in the spindle pole. It localises to the cilium axoneme. Microtubule-binding protein which regulates microtubule organization and stability. Promotes the stability of astral microtubules and facilitates the proper orientation of the mitotic spindle. This allows the oriented division of basal keratinocytes and contributes to epidermal stratification. Required for the assembly of both primary and motile cilia. Destabilizes the interaction between CCP110 and CEP97 by competing with CEP97 for binding to CCP110 which promotes the removal of CCP110 and CEP97 from the mother centriole and allows the initiation of ciliogenesis. This Homo sapiens (Human) protein is Enkurin domain-containing protein 1 (ENKD1).